We begin with the raw amino-acid sequence, 97 residues long: C-C motif chemokine 7 (97 aa).

Positions 1–23 (MRISATLLCLLLIAAAFSIQVWA) are cleaved as a signal peptide. At Q24 the chain carries Pyrrolidone carboxylic acid. The N-linked (GlcNAc...) asparagine glycan is linked to N29. 2 cysteine pairs are disulfide-bonded: C33-C57 and C34-C73.

Belongs to the intercrine beta (chemokine CC) family. In terms of assembly, monomer. Interacts with TNFAIP6 (via Link domain).

It is found in the secreted. Its function is as follows. Chemotactic factor that attracts monocytes and eosinophils, but not neutrophils. Augments monocyte anti-tumor activity. This chain is C-C motif chemokine 7 (Ccl7), found in Mus musculus (Mouse).